The primary structure comprises 340 residues: Tartrate-resistant acid phosphatase type 5 (340 aa).

The signal sequence occupies residues 1 to 20 (MDTWTVLLILQASLVLPGAV). Fe cation is bound by residues aspartate 41, aspartate 79, tyrosine 82, and asparagine 118. 2 N-linked (GlcNAc...) asparagine glycosylation sites follow: asparagine 124 and asparagine 155. A disulfide bridge connects residues cysteine 169 and cysteine 227. Histidine 213, histidine 248, and histidine 250 together coordinate Fe cation.

Requires Fe cation as cofactor.

The protein localises to the secreted. It carries out the reaction a phosphate monoester + H2O = an alcohol + phosphate. Functionally, uteroferrin is a phosphoprotein phosphatase, synthesized in response to progesterone. It appears to function in transplacental transport of iron in pig. The chain is Tartrate-resistant acid phosphatase type 5 (ACP5) from Sus scrofa (Pig).